We begin with the raw amino-acid sequence, 259 residues long: Ribonuclease PH (259 aa).

Phosphate is bound by residues R88 and 126 to 128 (GTR).

This sequence belongs to the RNase PH family. Homohexameric ring arranged as a trimer of dimers.

It carries out the reaction tRNA(n+1) + phosphate = tRNA(n) + a ribonucleoside 5'-diphosphate. Phosphorolytic 3'-5' exoribonuclease that plays an important role in tRNA 3'-end maturation. Removes nucleotide residues following the 3'-CCA terminus of tRNAs; can also add nucleotides to the ends of RNA molecules by using nucleoside diphosphates as substrates, but this may not be physiologically important. Probably plays a role in initiation of 16S rRNA degradation (leading to ribosome degradation) during starvation. This Mycolicibacterium smegmatis (strain ATCC 700084 / mc(2)155) (Mycobacterium smegmatis) protein is Ribonuclease PH.